The following is a 342-amino-acid chain: Tetraacyldisaccharide 4'-kinase (342 aa).

56-63 (TAGGAGKT) is an ATP binding site.

Belongs to the LpxK family.

It catalyses the reaction a lipid A disaccharide + ATP = a lipid IVA + ADP + H(+). It functions in the pathway glycolipid biosynthesis; lipid IV(A) biosynthesis; lipid IV(A) from (3R)-3-hydroxytetradecanoyl-[acyl-carrier-protein] and UDP-N-acetyl-alpha-D-glucosamine: step 6/6. Its function is as follows. Transfers the gamma-phosphate of ATP to the 4'-position of a tetraacyldisaccharide 1-phosphate intermediate (termed DS-1-P) to form tetraacyldisaccharide 1,4'-bis-phosphate (lipid IVA). This chain is Tetraacyldisaccharide 4'-kinase, found in Parvibaculum lavamentivorans (strain DS-1 / DSM 13023 / NCIMB 13966).